Here is a 467-residue protein sequence, read N- to C-terminus: Asparagine--tRNA ligase (467 aa).

The protein belongs to the class-II aminoacyl-tRNA synthetase family. In terms of assembly, homodimer.

The protein resides in the cytoplasm. The enzyme catalyses tRNA(Asn) + L-asparagine + ATP = L-asparaginyl-tRNA(Asn) + AMP + diphosphate + H(+). The chain is Asparagine--tRNA ligase from Legionella pneumophila (strain Corby).